The primary structure comprises 458 residues: Histone acetyltransferase KAT8 (458 aa).

Low complexity-rich tracts occupy residues 1–17 (MAAQ…TSGT) and 25–35 (PGENAAVEGPA). The interval 1–52 (MAAQGATAAVAATTSGTVGEGEPGPGENAAVEGPARSPGRVSPPTPARGEPE) is disordered. An N-acetylalanine modification is found at alanine 2. Serine 37 and serine 42 each carry phosphoserine. One can recognise a Tudor-knot domain in the interval 55 to 110 (VEIGETYLCRRPDSTWHSAEVIQSRVNDQEGREEFYVHYVGFNRRLDEWVDKNRLA). At lysine 113 the chain carries N6-acetyllysine. The short motif at 140-149 (RNQKRKHDEI) is the Nuclear localization signal element. Positions 174–447 (TKVKYVDKIH…VDSVCLKWAP (274 aa)) constitute an MYST-type HAT domain. The tract at residues 174–458 (TKVKYVDKIH…KHKQVKLSKK (285 aa)) is sufficient for interaction with KANSL1. The C2HC MYST-type zinc-finger motif lies at 207 to 232 (LWLCEYCLKYMKFEKSYRFHLGQCQW). The Zn(2+) site is built by cysteine 210, cysteine 213, histidine 226, and cysteine 230. At lysine 274 the chain carries N6-acetyllysine. 7 residues coordinate acetyl-CoA: isoleucine 317, threonine 319, arginine 325, arginine 326, glycine 327, glycine 329, and lysine 330. At serine 348 the chain carries Phosphoserine. The active-site Proton donor/acceptor is glutamate 350. 4 residues coordinate acetyl-CoA: serine 354, serine 363, tyrosine 408, and lysine 432.

Belongs to the MYST (SAS/MOZ) family. As to quaternary structure, component of a multisubunit histone acetyltransferase complex (MSL) at least composed of the MOF/KAT8, MSL1/hampin, MSL2L1 and MSL3L1. Component of the NSL complex at least composed of MOF/KAT8, KANSL1, KANSL2, KANSL3, MCRS1, PHF20, OGT1/OGT, WDR5 and HCFC1. Component of some MLL1/MLL complex, at least composed of the core components KMT2A/MLL1, ASH2L, HCFC1, WDR5 and RBBP5, as well as the facultative components BACC1, CHD8, E2F6, HSP70, INO80C, KANSL1, LAS1L, MAX, MCRS1, MGA, MOF/KAT8, PELP1, PHF20, PRP31, RING2, RUVB1/TIP49A, RUVB2/TIP49B, SENP3, TAF1, TAF4, TAF6, TAF7, TAF9 and TEX10. Interacts with the chromodomain of MORF4L1/MRG15. Interacts with ATM (via its Tudor-knot domain); possibly regulating the activity of ATM. Interacts with NELFD. Post-translationally, acetylation at Lys-274 facilitates cognate substrate Lys-binding and acetylation. Although considered as an autoacetylation event, acetylation at Lys-274 probably takes place via a non-enzymatic process following acetyl-CoA-binding, which primes KAT8 for cognate protein-lysine acetylation. In terms of tissue distribution, during oocyte development, expressed in both oocytes and granulosa cells.

Its subcellular location is the nucleus. It is found in the chromosome. The protein resides in the mitochondrion. The catalysed reaction is L-lysyl-[histone] + acetyl-CoA = N(6)-acetyl-L-lysyl-[histone] + CoA + H(+). The enzyme catalyses L-lysyl-[protein] + acetyl-CoA = N(6)-acetyl-L-lysyl-[protein] + CoA + H(+). It catalyses the reaction propanoyl-CoA + L-lysyl-[protein] = N(6)-propanoyl-L-lysyl-[protein] + CoA + H(+). The acetyltransferase activity is inhibited by anacardic acid derivatives. In terms of biological role, histone acetyltransferase that catalyzes histone H4 acetylation at 'Lys-5'- and 'Lys-8' (H4K5ac and H4K8ac) or 'Lys-16' (H4K16ac), depending on the context. Catalytic component of the MSL histone acetyltransferase complex, a multiprotein complex that mediates the majority of histone H4 acetylation at 'Lys-16' (H4K16ac), an epigenetic mark that prevents chromatin compaction. H4K16ac constitutes the only acetylation mark intergenerationally transmitted and regulates key biological processes, such as oogenesis, embryonic stem cell pluripotency, hematopoiesis or glucose metabolism. The MSL complex is required for chromosome stability and genome integrity by maintaining homeostatic levels of H4K16ac. The MSL complex is also involved in gene dosage by promoting up-regulation of genes expressed by the X chromosome. X up-regulation is required to compensate for autosomal biallelic expression. The MSL complex also participates in gene dosage compensation by promoting expression of Tsix non-coding RNA. As part of the NSL histone acetyltransferase complex, catalyzes histone H4 acetylation at 'Lys-5'- and 'Lys-8' (H4K5ac and H4K8ac) at transcription start sites and promotes transcription initiation. The NSL complex also acts as a regulator of gene expression in mitochondria: KAT8 associates with mitochondrial DNA and controls expression of respiratory genes in an acetyltransferase-dependent mechanism. Also functions as an acetyltransferase for non-histone targets, such as ALKBH5, COX17, IRF3, KDM1A/LSD1, LMNA, PAX7 or TP53/p53. Acts as an inhibitor of antiviral immunity by acetylating IRF3, preventing IRF3 recruitment to promoters. Acts as a regulator of asymmetric division in muscle stem cells by mediating acetylation of PAX7. As part of the NSL complex, acetylates TP53/p53 at 'Lys-120'. Acts as a regulator of epithelial-to-mesenchymal transition as part of the NSL complex by mediating acetylation of KDM1A/LSD1. The NSL complex is required for nuclear architecture maintenance by mediating acetylation of LMNA. Promotes mitochondrial integrity by catalyzing acetylation of COX17. In addition to protein acetyltransferase activity, able to mediate protein propionylation. The protein is Histone acetyltransferase KAT8 of Mus musculus (Mouse).